A 462-amino-acid polypeptide reads, in one-letter code: Protoheme IX farnesyltransferase, mitochondrial (462 aa).

The next 7 membrane-spanning stretches (helical) occupy residues 152 to 172, 173 to 193, 237 to 257, 269 to 289, 296 to 316, 348 to 368, and 411 to 431; these read LTIL…YTVS, LPEL…ANAI, MLFL…IVLY, IINT…GWAA, PGAW…FNAL, SLLM…DWVF, and AKKL…LAML.

The protein belongs to the UbiA prenyltransferase family.

It localises to the mitochondrion membrane. Its function is as follows. Converts protoheme IX and farnesyl diphosphate to heme O. The polypeptide is Protoheme IX farnesyltransferase, mitochondrial (COX10) (Debaryomyces hansenii (strain ATCC 36239 / CBS 767 / BCRC 21394 / JCM 1990 / NBRC 0083 / IGC 2968) (Yeast)).